The chain runs to 397 residues: Elongation factor Tu (397 aa).

The region spanning 10 to 207 is the tr-type G domain; sequence LPHVNVGTIG…TLDSYIPEPE (198 aa). Residues 19 to 26 form a G1 region; that stretch reads GHVDHGKT. 19–26 lines the GTP pocket; the sequence is GHVDHGKT. Threonine 26 is a Mg(2+) binding site. The segment at 60–64 is G2; it reads GITIN. The G3 stretch occupies residues 81–84; it reads DCPG. GTP-binding positions include 81 to 85 and 136 to 139; these read DCPGH and NKAD. Positions 136 to 139 are G4; that stretch reads NKAD. The tract at residues 174–176 is G5; sequence SAR.

It belongs to the TRAFAC class translation factor GTPase superfamily. Classic translation factor GTPase family. EF-Tu/EF-1A subfamily. In terms of assembly, monomer.

The protein localises to the cytoplasm. The enzyme catalyses GTP + H2O = GDP + phosphate + H(+). In terms of biological role, GTP hydrolase that promotes the GTP-dependent binding of aminoacyl-tRNA to the A-site of ribosomes during protein biosynthesis. This Pseudomonas fluorescens (strain Pf0-1) protein is Elongation factor Tu.